Reading from the N-terminus, the 100-residue chain is MVPYEYYVVLSGLLMVLGLIGIIIRKNLIAMLLSTELMLNAVNIAFVAFDMKLYDVSGQVFVFFILTIAAAEAAVGLGLIMAIYRLRKDVDVNTLTELKL.

3 helical membrane-spanning segments follow: residues 4-24, 29-49, and 60-80; these read YEYY…GIII, IAML…FVAF, and VFVF…LGLI.

It belongs to the complex I subunit 4L family. As to quaternary structure, NDH-1 is composed of 14 different subunits. Subunits NuoA, H, J, K, L, M, N constitute the membrane sector of the complex.

It is found in the cell inner membrane. The enzyme catalyses a quinone + NADH + 5 H(+)(in) = a quinol + NAD(+) + 4 H(+)(out). In terms of biological role, NDH-1 shuttles electrons from NADH, via FMN and iron-sulfur (Fe-S) centers, to quinones in the respiratory chain. The immediate electron acceptor for the enzyme in this species is believed to be ubiquinone. Couples the redox reaction to proton translocation (for every two electrons transferred, four hydrogen ions are translocated across the cytoplasmic membrane), and thus conserves the redox energy in a proton gradient. This is NADH-quinone oxidoreductase subunit K from Persephonella marina (strain DSM 14350 / EX-H1).